The following is a 425-amino-acid chain: Enolase (425 aa).

Gln162 serves as a coordination point for (2R)-2-phosphoglycerate. The active-site Proton donor is the Glu204. Residues Asp241, Glu282, and Asp309 each coordinate Mg(2+). 4 residues coordinate (2R)-2-phosphoglycerate: Lys334, Arg363, Ser364, and Lys385. Lys334 (proton acceptor) is an active-site residue.

This sequence belongs to the enolase family. Mg(2+) is required as a cofactor.

It localises to the cytoplasm. The protein localises to the secreted. It is found in the cell surface. The catalysed reaction is (2R)-2-phosphoglycerate = phosphoenolpyruvate + H2O. The protein operates within carbohydrate degradation; glycolysis; pyruvate from D-glyceraldehyde 3-phosphate: step 4/5. Its function is as follows. Catalyzes the reversible conversion of 2-phosphoglycerate (2-PG) into phosphoenolpyruvate (PEP). It is essential for the degradation of carbohydrates via glycolysis. This chain is Enolase, found in Corynebacterium diphtheriae (strain ATCC 700971 / NCTC 13129 / Biotype gravis).